We begin with the raw amino-acid sequence, 163 residues long: Acetolactate synthase isozyme 3 small subunit (163 aa).

Positions 4 to 78 (ILSVLLENES…DVLRVSELGQ (75 aa)) constitute an ACT domain.

The protein belongs to the acetolactate synthase small subunit family. As to quaternary structure, dimer of large and small chains.

The catalysed reaction is 2 pyruvate + H(+) = (2S)-2-acetolactate + CO2. The protein operates within amino-acid biosynthesis; L-isoleucine biosynthesis; L-isoleucine from 2-oxobutanoate: step 1/4. Its pathway is amino-acid biosynthesis; L-valine biosynthesis; L-valine from pyruvate: step 1/4. With respect to regulation, sensitive to valine inhibition. The polypeptide is Acetolactate synthase isozyme 3 small subunit (ilvH) (Escherichia coli (strain K12)).